Here is a 185-residue protein sequence, read N- to C-terminus: MISDIRKDAEVRMDKCVEAFKTQISKIRTGRASPSLLDGIVVEYYGTPTPLRQLASVTVEDSRTLKINVFDRSMSPAVEKAIMASDLGLNPNSAGSDIRVPLPPLTEERRKDLTKIVRGEAEQARVAVRNVRRDANDKVKALLKDKEISEDDDRRSQDDVQKLTDAAIKKIEAALADKEAELMQF.

The residue at position 162 (Lys162) is an N6-acetyllysine.

The protein belongs to the RRF family.

Its subcellular location is the cytoplasm. Functionally, responsible for the release of ribosomes from messenger RNA at the termination of protein biosynthesis. May increase the efficiency of translation by recycling ribosomes from one round of translation to another. The protein is Ribosome-recycling factor of Shigella boydii serotype 18 (strain CDC 3083-94 / BS512).